The chain runs to 346 residues: MKKVLLQNHPGSEKYSFNGWEIFNSNFERMIKENKAMLLCKWGFYLTCVVAVMFVFAAITSNGLNERGLITAGCSFLYLLIMMGLIVRAGFKAKKEQLHYYQAKGIEPLSIEKLQALQLIAPYRFYHKQWSETLEFWPRKPEPGKDTFQYHVLPFDSIDIISKRRESLEDQWGIEDSESYCALMEHFLSGDHGANTFKANMEEAPEQVIALLNKFAVFPSDYISDCANHSSGKSSAKLIWAAELSWMISISSTAFQNGTIEEELAWHYIMLASRKAHELFESEEDYQKNSQMGFLYWHICCYRRKLTDAELEACYRYDKQFWEHYSKKCRWPIRNVPWGASSVKYS.

At 1 to 38 (MKKVLLQNHPGSEKYSFNGWEIFNSNFERMIKENKAML) the chain is on the periplasmic side. The chain crosses the membrane as a helical span at residues 39–59 (LCKWGFYLTCVVAVMFVFAAI). Residues 60 to 68 (TSNGLNERG) lie on the Cytoplasmic side of the membrane. The helical transmembrane segment at 69–89 (LITAGCSFLYLLIMMGLIVRA) threads the bilayer. Residues 90–234 (GFKAKKEQLH…DCANHSSGKS (145 aa)) are Periplasmic-facing. A helical membrane pass occupies residues 235–255 (SAKLIWAAELSWMISISSTAF). Over 256–346 (QNGTIEEELA…PWGASSVKYS (91 aa)) the chain is Cytoplasmic.

The protein resides in the cell inner membrane. The protein is Inner membrane protein YnjI (ynjI) of Escherichia coli (strain K12).